Consider the following 115-residue polypeptide: T cell receptor beta variable 7-7 (115 aa).

An N-terminal signal peptide occupies residues 1–21 (MGTSLLCWVVLGFLGTDHTGA). The Ig-like domain occupies 22 to 115 (GVSQSPRYKV…SAMYRCASSL (94 aa)). A disulfide bond links Cys-42 and Cys-111.

Alpha-beta TR is a heterodimer composed of an alpha and beta chain; disulfide-linked. The alpha-beta TR is associated with the transmembrane signaling CD3 coreceptor proteins to form the TR-CD3 (TcR or TCR). The assembly of alpha-beta TR heterodimers with CD3 occurs in the endoplasmic reticulum where a single alpha-beta TR heterodimer associates with one CD3D-CD3E heterodimer, one CD3G-CD3E heterodimer and one CD247 homodimer forming a stable octameric structure. CD3D-CD3E and CD3G-CD3E heterodimers preferentially associate with TR alpha and TR beta chains, respectively. The association of the CD247 homodimer is the last step of TcR assembly in the endoplasmic reticulum and is required for transport to the cell surface.

It localises to the cell membrane. Functionally, v region of the variable domain of T cell receptor (TR) beta chain that participates in the antigen recognition. Alpha-beta T cell receptors are antigen specific receptors which are essential to the immune response and are present on the cell surface of T lymphocytes. Recognize peptide-major histocompatibility (MH) (pMH) complexes that are displayed by antigen presenting cells (APC), a prerequisite for efficient T cell adaptive immunity against pathogens. Binding of alpha-beta TR to pMH complex initiates TR-CD3 clustering on the cell surface and intracellular activation of LCK that phosphorylates the ITAM motifs of CD3G, CD3D, CD3E and CD247 enabling the recruitment of ZAP70. In turn ZAP70 phosphorylates LAT, which recruits numerous signaling molecules to form the LAT signalosome. The LAT signalosome propagates signal branching to three major signaling pathways, the calcium, the mitogen-activated protein kinase (MAPK) kinase and the nuclear factor NF-kappa-B (NF-kB) pathways, leading to the mobilization of transcription factors that are critical for gene expression and essential for T cell growth and differentiation. The T cell repertoire is generated in the thymus, by V-(D)-J rearrangement. This repertoire is then shaped by intrathymic selection events to generate a peripheral T cell pool of self-MH restricted, non-autoaggressive T cells. Post-thymic interaction of alpha-beta TR with the pMH complexes shapes TR structural and functional avidity. This Homo sapiens (Human) protein is T cell receptor beta variable 7-7.